The following is a 903-amino-acid chain: Protein translocase subunit SecA (903 aa).

Residues Gln-87, 105–109 (GEGKT), and Asp-512 contribute to the ATP site. Residues 853 to 903 (KQQQLSHYEENALVTEDPNAPATAERKVGRNDPCPCGSGKKYKQCHGRLQS) form a disordered region. Residues Cys-886, Cys-888, Cys-897, and His-898 each contribute to the Zn(2+) site. Positions 892–903 (KKYKQCHGRLQS) are enriched in basic residues.

It belongs to the SecA family. Monomer and homodimer. Part of the essential Sec protein translocation apparatus which comprises SecA, SecYEG and auxiliary proteins SecDF-YajC and YidC. Zn(2+) serves as cofactor.

The protein localises to the cell inner membrane. It localises to the cytoplasm. It carries out the reaction ATP + H2O + cellular proteinSide 1 = ADP + phosphate + cellular proteinSide 2.. Its function is as follows. Part of the Sec protein translocase complex. Interacts with the SecYEG preprotein conducting channel. Has a central role in coupling the hydrolysis of ATP to the transfer of proteins into and across the cell membrane, serving both as a receptor for the preprotein-SecB complex and as an ATP-driven molecular motor driving the stepwise translocation of polypeptide chains across the membrane. This is Protein translocase subunit SecA from Serratia proteamaculans (strain 568).